The sequence spans 242 residues: Zinc import ATP-binding protein ZnuC (242 aa).

The region spanning 24–241 (INVENLSFFY…EKFLKMFSSY (218 aa)) is the ABC transporter domain. 56 to 63 (GPNGGGKT) contributes to the ATP binding site.

It belongs to the ABC transporter superfamily. Zinc importer (TC 3.A.1.15.5) family. The complex is composed of two ATP-binding proteins (ZnuC), two transmembrane proteins (ZnuB) and a solute-binding protein (ZnuA).

The protein resides in the cell inner membrane. It catalyses the reaction Zn(2+)(out) + ATP(in) + H2O(in) = Zn(2+)(in) + ADP(in) + phosphate(in) + H(+)(in). Part of the ABC transporter complex ZnuABC involved in zinc import. Responsible for energy coupling to the transport system. In Ehrlichia chaffeensis (strain ATCC CRL-10679 / Arkansas), this protein is Zinc import ATP-binding protein ZnuC.